Here is a 1034-residue protein sequence, read N- to C-terminus: Potassium-transporting ATPase alpha chain 1 (1034 aa).

Residues 2-97 (GKAENYELYQ…NALRPPRGTP (96 aa)) lie on the Cytoplasmic side of the membrane. Phosphotyrosine is present on residues Tyr7 and Tyr10. Residues 13 to 40 (ELGPGPSGDMAAKMSKKKAGRGGGKRKE) form a disordered region. The span at 26-39 (MSKKKAGRGGGKRK) shows a compositional bias: basic residues. At Ser27 the chain carries Phosphoserine; by PKA and PKC. A helical membrane pass occupies residues 98-118 (EYVKFARQLAGGLQCLMWVAA). Topologically, residues 119–141 (AICLIAFAIQASEGDLTTDDNLY) are lumenal. The helical transmembrane segment at 142–162 (LALALIAVVVVTGCFGYYQEF) threads the bilayer. Topologically, residues 163–298 (KSTNIIASFK…NEKTPIAIEI (136 aa)) are cytoplasmic. Residues 222–244 (KVDNSSLTGESEPQTRSPECTHE) form a disordered region. A compositionally biased stretch (polar residues) spans 225–239 (NSSLTGESEPQTRSP). The helical transmembrane segment at 299 to 318 (EHFVDIIAGLAILFGATFFI) threads the bilayer. At 319–330 (VAMCIGYTFLRA) the chain is on the lumenal side. The chain crosses the membrane as a helical span at residues 331–348 (MVFFMAIVVAYVPEGLLA). Val339, Ala340, Val342, and Glu344 together coordinate K(+). The Cytoplasmic portion of the chain corresponds to 349–782 (TVTVCLSLTA…EQGRLIFDNL (434 aa)). The active-site 4-aspartylphosphate intermediate is the Asp386. Asp386 and Thr388 together coordinate Mg(2+). Phosphoserine occurs at positions 462 and 600. Residues Asp727 and Asp731 each coordinate Mg(2+). A helical membrane pass occupies residues 783–802 (KKSIAYTLTKNIPELTPYLI). K(+) is bound at residue Glu796. The Lumenal segment spans residues 803–812 (YITVSVPLPL). A helical transmembrane segment spans residues 813–833 (GCITILFIELCTDIFPSVSLA). Glu821 lines the K(+) pocket. Topologically, residues 834–853 (YEKAESDIMHLRPRNPKRDR) are cytoplasmic. Ser839 bears the Phosphoserine mark. Residues 854–876 (LVNEPLAAYSYFQIGAIQSFAGF) traverse the membrane as a helical segment. The Lumenal portion of the chain corresponds to 877 to 928 (TDYFTAMAQEGWFPLLCVGLRPQWENHHLQDLQDSYGQEWTFGQRLYQQYTC). Residues 929-948 (YTVFFISIEMCQIADVLIRK) traverse the membrane as a helical segment. The Cytoplasmic portion of the chain corresponds to 949–962 (TRRLSAFQQGFFRN). Ser953 is subject to Phosphoserine; by PKA. A helical membrane pass occupies residues 963–981 (RILVIAIVFQVCIGCFLCY). Residues 982–996 (CPGMPNIFNFMPIRF) lie on the Lumenal side of the membrane. The helical transmembrane segment at 997 to 1017 (QWWLVPMPFGLLIFVYDEIRK) threads the bilayer. Residues 1018–1034 (LGVRCCPGSWWDQELYY) are Cytoplasmic-facing.

It belongs to the cation transport ATPase (P-type) (TC 3.A.3) family. Type IIC subfamily. As to quaternary structure, the gastric H(+)/K(+) ATPase pump is composed of the catalytic alpha subunit ATP4A and the regulatory beta subunit ATP4B. Interacts (via the P-domain) with ATP4B (via N-terminus); this interaction stabilizes the lumenal-open E2 conformation state and prevents the reverse reaction of the transport cycle.

It localises to the apical cell membrane. The protein localises to the cell membrane. It carries out the reaction K(+)(out) + ATP + H2O + H(+)(in) = K(+)(in) + ADP + phosphate + 2 H(+)(out). With respect to regulation, down-regulated by K(+)-competitive acid blockers (P-CABs) such as vonoprazan. Functionally, the catalytic subunit of the gastric H(+)/K(+) ATPase pump which transports H(+) ions in exchange for K(+) ions across the apical membrane of parietal cells. Uses ATP as an energy source to pump H(+) ions to the gastric lumen while transporting K(+) ion from the lumen into the cell. Remarkably generates a million-fold proton gradient across the gastric parietal cell membrane, acidifying the gastric juice down to pH 1. Within a transport cycle, the transfer of a H(+) ion across the membrane is coupled to ATP hydrolysis and is associated with a transient phosphorylation that shifts the pump conformation from inward-facing (E1) to outward-facing state (E2). The release of the H(+) ion in the stomach lumen is followed by binding of K(+) ion converting the pump conformation back to the E1 state. The polypeptide is Potassium-transporting ATPase alpha chain 1 (ATP4A) (Sus scrofa (Pig)).